Here is a 759-residue protein sequence, read N- to C-terminus: Mitogen-activated protein kinase kinase kinase 1a (759 aa).

Basic and acidic residues-rich tracts occupy residues 1–17 (MIEE…DRGS), 25–36 (SFEDKGSSHDWK), and 52–64 (AKKD…KVDS). 4 disordered regions span residues 1–90 (MIEE…NLSK), 122–160 (LGIE…SHDF), 165–184 (SRVD…LAPM), and 195–239 (RKHR…PDPL). Residues 72–85 (VHSTSSPRLSPASS) show a composition bias toward low complexity. The Protein kinase domain maps to 426 to 679 (WAKGEFLGSG…CDMLLAHPFI (254 aa)). ATP contacts are provided by residues 432–440 (LGSGTFGSV) and lysine 454. Residue aspartate 549 is the Proton acceptor of the active site.

The protein belongs to the protein kinase superfamily. STE Ser/Thr protein kinase family. MAP kinase kinase kinase subfamily.

Its subcellular location is the cell membrane. The catalysed reaction is L-seryl-[protein] + ATP = O-phospho-L-seryl-[protein] + ADP + H(+). It carries out the reaction L-threonyl-[protein] + ATP = O-phospho-L-threonyl-[protein] + ADP + H(+). The CERK1, MEKK1a/b, MKK1a/b/c and MPK4a/b proteins are involved in pathogen defense. The pathway induces rapid growth inhibition, cell wall depositions and accumulation of defense-related transcripts. This protein is required for responses to chitin and acts redundantly with MEKK1b. The polypeptide is Mitogen-activated protein kinase kinase kinase 1a (Physcomitrium patens (Spreading-leaved earth moss)).